A 627-amino-acid chain; its full sequence is Neuronal acetylcholine receptor subunit alpha-4 (627 aa).

An N-terminal signal peptide occupies residues M1 to P31. Topologically, residues V32–L244 are extracellular. A glycan (N-linked (GlcNAc...) asparagine) is linked at N59. Residues V78 and E80 each coordinate Ca(2+). N109 and N176 each carry an N-linked (GlcNAc...) asparagine glycan. Intrachain disulfides connect C163–C177 and C227–C228. The helical transmembrane segment at P245–L269 threads the bilayer. C273 is lipidated: S-palmitoyl cysteine. 2 helical membrane-spanning segments follow: residues V277 to T295 and Y311 to V332. Topologically, residues H333–R600 are cytoplasmic. A compositionally biased stretch (low complexity) spans P384–G399. A disordered region spans residues P384–L463. The residue at position 427 (S427) is a Phosphoserine. A compositionally biased stretch (pro residues) spans S444 to T458. S541 carries the phosphoserine modification. A helical membrane pass occupies residues I601 to L619.

The protein belongs to the ligand-gated ion channel (TC 1.A.9) family. Acetylcholine receptor (TC 1.A.9.1) subfamily. Alpha-4/CHRNA4 sub-subfamily. Neuronal AChR is composed of two different types of subunits: alpha and beta. CHRNA4 forms heteropentameric neuronal acetylcholine receptors with CHRNB2 and CHRNB4, as well as CHRNA5 and CHRNB3 as accesory subunits. Found in two major stoichiometric forms, LS (low agonist sensitivity): (CHRNA4)3:(CHRNB2)2 and HS (high agonist sensitivity): (CHRNA4)2:(CHRNB2)3, the two stoichiometric forms differ in their unitary conductance, calcium permeability, ACh sensitivity and potentiation by divalent cation. Cells produce predominantly an (CHRNA4)3:(CHRNB2)2 nAChR. The (CHRNA4)2:(CHRNB2)3 expression is selectively up-regulated by nicotine and has lower single channel conductance and calcium permeability. In the striatum, also forms CHRNA4:CHRNA6:CHRNB2 complexes. Also found in the stoichiometric form: (CHRNA4:CHRNB2)2:CHRNB3. Interacts with RIC3; which is required for proper folding and assembly. Interacts with LYPD6.

It is found in the synaptic cell membrane. Its subcellular location is the cell membrane. The catalysed reaction is Ca(2+)(in) = Ca(2+)(out). It carries out the reaction K(+)(in) = K(+)(out). The enzyme catalyses Na(+)(in) = Na(+)(out). Its activity is regulated as follows. Activated by a myriad of ligands such as acetylcholine, cytisine, nicotine, choline and epibatidine. Channel potentiation by calcium is stoichiometry-selective, CHRNA4:CHRNB2 nACh receptor is achieved by calcium association with topographically distinct sites framed by anionic residues within the CHRNA4 subunit and between the CHRNA4 and CHRNB2 subunits. nAChR activity is inhibited by the antagonist alpha-conotoxins BuIA, PnIA, GID and MII, small disulfide-constrained peptides from cone snails. Functionally, component of neuronal acetylcholine receptors (nAChRs) that function as pentameric, ligand-gated cation channels with high calcium permeability among other activities. nAChRs are excitatory neurotrasnmitter receptors formed by a collection of nAChR subunits known to mediate synaptic transmission in the nervous system and the neuromuscular junction. Each nAchR subunit confers differential attributes to channel properties, including activation, deactivation and desensitization kinetics, pH sensitivity, cation permeability, and binding to allosteric modulators. CHRNA4 forms heteropentameric neuronal acetylcholine receptors with CHRNB2 and CHRNB4, as well as CHRNA5 and CHRNB3 as accesory subunits. Is the most abundant nAChR subtype expressed in the central nervous system. Found in two major stoichiometric forms,(CHRNA4)3:(CHRNB2)2 and (CHRNA4)2:(CHRNB2)3, the two stoichiometric forms differ in their unitary conductance, calcium permeability, ACh sensitivity and potentiation by divalent cation. Involved in the modulation of calcium-dependent signaling pathways, influences the release of neurotransmitters, including dopamine, glutamate and GABA. This is Neuronal acetylcholine receptor subunit alpha-4 (CHRNA4) from Mustela putorius furo (European domestic ferret).